The sequence spans 509 residues: MPSGFQQIGSEDGEPPQQRVTGTLVLAVFSAVLGSLQFGYNIGVINAPQKVIEQSYNETWLGRQGPEGPSSIPPGTLTTLWALSVAIFSVGGMISSFLIGIISQWLGRKRAMLVNNVLAVLGGSLMGLANAAASYEMLILGRFLIGAYSGLTSGLVPMYVGEIAPTHLRGALGTLNQLAIVIGILIAQVLGLESLLGTASLWPLLLGLTVLPALLQLVLLPFCPESPRYLYIIQNLEGPARKSLKRLTGWADVSGVLAELKDEKRKLERERPLSLLQLLGSRTHRQPLIIAVVLQLSQQLSGINAVFYYSTSIFETAGVGQPAYATIGAGVVNTVFTLVSVLLVERAGRRTLHLLGLAGMCGCAILMTVALLLLERVPAMSYVSIVAIFGFVAFFEIGPGPIPWFIVAELFSQGPRPAAMAVAGFSNWTSNFIIGMGFQYVAEAMGPYVFLLFAVLLLGFFIFTFLRVPETRGRTFDQISAAFHRTPSLLEQEVKPSTELEYLGPDEND.

Residues 1-24 lie on the Cytoplasmic side of the membrane; that stretch reads MPSGFQQIGSEDGEPPQQRVTGTL. The interaction with SRFBP1 stretch occupies residues 7 to 13; the sequence is QIGSEDG. Residue Ser10 is modified to Phosphoserine. Residues 25–45 form a helical membrane-spanning segment; that stretch reads VLAVFSAVLGSLQFGYNIGVI. The Extracellular portion of the chain corresponds to 46–81; it reads NAPQKVIEQSYNETWLGRQGPEGPSSIPPGTLTTLW. Asn57 carries N-linked (GlcNAc...) asparagine glycosylation. The helical transmembrane segment at 82–102 threads the bilayer; it reads ALSVAIFSVGGMISSFLIGII. At 103 to 111 the chain is on the cytoplasmic side; the sequence is SQWLGRKRA. Residues 112–132 form a helical membrane-spanning segment; it reads MLVNNVLAVLGGSLMGLANAA. The Extracellular portion of the chain corresponds to 133–142; that stretch reads ASYEMLILGR. A helical transmembrane segment spans residues 143–163; that stretch reads FLIGAYSGLTSGLVPMYVGEI. The Cytoplasmic segment spans residues 164–171; the sequence is APTHLRGA. A helical transmembrane segment spans residues 172–192; the sequence is LGTLNQLAIVIGILIAQVLGL. Residue Gln177 participates in D-glucose binding. Residues 193–201 are Extracellular-facing; it reads ESLLGTASL. The helical transmembrane segment at 202-222 threads the bilayer; sequence WPLLLGLTVLPALLQLVLLPF. Residue Cys223 is the site of S-palmitoyl cysteine attachment. The Cytoplasmic portion of the chain corresponds to 223–287; that stretch reads CPESPRYLYI…LLGSRTHRQP (65 aa). Residue Ser274 is modified to Phosphoserine; by SGK1. The chain crosses the membrane as a helical span at residues 288-308; it reads LIIAVVLQLSQQLSGINAVFY. D-glucose contacts are provided by residues 298-299 and Asn304; that span reads QQ. Topologically, residues 309-323 are extracellular; it reads YSTSIFETAGVGQPA. A helical transmembrane segment spans residues 324-344; sequence YATIGAGVVNTVFTLVSVLLV. Asn333 serves as a coordination point for D-glucose. Residues 345–353 lie on the Cytoplasmic side of the membrane; sequence ERAGRRTLH. Residues 354–374 traverse the membrane as a helical segment; it reads LLGLAGMCGCAILMTVALLLL. Residues 375–384 are Extracellular-facing; it reads ERVPAMSYVS. The chain crosses the membrane as a helical span at residues 385–405; the sequence is IVAIFGFVAFFEIGPGPIPWF. Residues Glu396 and Trp404 each contribute to the D-glucose site. At 406–417 the chain is on the cytoplasmic side; the sequence is IVAELFSQGPRP. The chain crosses the membrane as a helical span at residues 418–438; that stretch reads AAMAVAGFSNWTSNFIIGMGF. The Extracellular segment spans residues 439–445; the sequence is QYVAEAM. Residues 446 to 466 form a helical membrane-spanning segment; sequence GPYVFLLFAVLLLGFFIFTFL. Residues 467–509 are Cytoplasmic-facing; that stretch reads RVPETRGRTFDQISAAFHRTPSLLEQEVKPSTELEYLGPDEND. Thr486 is modified (phosphothreonine). Residue Ser488 is modified to Phosphoserine. The Dileucine internalization motif motif lies at 489-490; that stretch reads LL.

This sequence belongs to the major facilitator superfamily. Sugar transporter (TC 2.A.1.1) family. Glucose transporter subfamily. Interacts with NDUFA9. Binds to DAXX. Interacts via its N-terminus with SRFBP1. Interacts with TRARG1; the interaction is required for proper SLC2A4 recycling after insulin stimulation. Post-translationally, sumoylated. Palmitoylated. Palmitoylation by ZDHHC7 controls the insulin-dependent translocation of GLUT4 to the plasma membrane. As to expression, skeletal and cardiac muscles; brown and white fat.

It is found in the cell membrane. The protein localises to the endomembrane system. It localises to the cytoplasm. Its subcellular location is the perinuclear region. It catalyses the reaction D-glucose(out) = D-glucose(in). Functionally, insulin-regulated facilitative glucose transporter, which plays a key role in removal of glucose from circulation. Response to insulin is regulated by its intracellular localization: in the absence of insulin, it is efficiently retained intracellularly within storage compartments in muscle and fat cells. Upon insulin stimulation, translocates from these compartments to the cell surface where it transports glucose from the extracellular milieu into the cell. This chain is Solute carrier family 2, facilitated glucose transporter member 4, found in Homo sapiens (Human).